Reading from the N-terminus, the 273-residue chain is Oligodendrocyte transcription factor 3 (273 aa).

Residues M1 to S14 are compositionally biased toward low complexity. A disordered region spans residues M1–K72. A compositionally biased stretch (basic residues) spans D24–Q34. Polar residues predominate over residues R37 to D47. A coiled-coil region spans residues S69–N90. One can recognise a bHLH domain in the interval Q84 to L138.

Weakly expressed, mainly in non-neural tissues.

The protein resides in the nucleus. May determine the distinct specification program of class A neurons in the dorsal part of the spinal cord and suppress specification of class B neurons. This Mus musculus (Mouse) protein is Oligodendrocyte transcription factor 3 (Olig3).